The chain runs to 392 residues: RNA-binding protein 42 (392 aa).

An RRM domain is found at Phe293–Trp371. Residues Lys372–Arg392 form a disordered region. Over residues Lys381 to Arg392 the composition is skewed to basic residues.

The protein belongs to the RRM RBM42 family.

The protein localises to the nucleus. It localises to the cytoplasm. May bind RNA. The polypeptide is RNA-binding protein 42 (rbm42) (Xenopus tropicalis (Western clawed frog)).